The primary structure comprises 460 residues: Phosphoglucomutase (460 aa).

Residue Ser-103 is the Phosphoserine intermediate of the active site. Ser-103 is a binding site for Mg(2+). Substrate-binding positions include 103-104 and Lys-113; that span reads SH. Asp-239, Asp-241, and Asp-243 together coordinate Mg(2+). Substrate is bound by residues 243–244, Thr-303, and 322–324; these read DR and EMS.

It belongs to the phosphohexose mutase family. It depends on Mg(2+) as a cofactor.

Its subcellular location is the cytoplasm. It catalyses the reaction alpha-D-glucose 1-phosphate = alpha-D-glucose 6-phosphate. Functionally, this enzyme participates in both the breakdown and synthesis of glucose. In Neisseria gonorrhoeae, this protein is Phosphoglucomutase (pgm).